Reading from the N-terminus, the 245-residue chain is Adenosylcobinamide-GDP ribazoletransferase (245 aa).

The next 5 membrane-spanning stretches (helical) occupy residues 35-55, 108-128, 137-157, 176-196, and 197-217; these read WFPL…ALGL, IGAF…IGAH, GVLI…AALV, IAIG…TPAI, and TTVT…HLAR.

This sequence belongs to the CobS family. Mg(2+) is required as a cofactor.

Its subcellular location is the cell inner membrane. The enzyme catalyses alpha-ribazole + adenosylcob(III)inamide-GDP = adenosylcob(III)alamin + GMP + H(+). It carries out the reaction alpha-ribazole 5'-phosphate + adenosylcob(III)inamide-GDP = adenosylcob(III)alamin 5'-phosphate + GMP + H(+). Its pathway is cofactor biosynthesis; adenosylcobalamin biosynthesis; adenosylcobalamin from cob(II)yrinate a,c-diamide: step 7/7. Joins adenosylcobinamide-GDP and alpha-ribazole to generate adenosylcobalamin (Ado-cobalamin). Also synthesizes adenosylcobalamin 5'-phosphate from adenosylcobinamide-GDP and alpha-ribazole 5'-phosphate. This Nitratidesulfovibrio vulgaris (strain ATCC 29579 / DSM 644 / CCUG 34227 / NCIMB 8303 / VKM B-1760 / Hildenborough) (Desulfovibrio vulgaris) protein is Adenosylcobinamide-GDP ribazoletransferase.